Consider the following 167-residue polypeptide: Early nodulin-like protein 16 (167 aa).

The first 24 residues, 1 to 24 (MARVAVLVAGAVLAFLLAATNVTA), serve as a signal peptide directing secretion. A Phytocyanin domain is found at 25–126 (KRWTVGDNKF…GMKLAVLVEK (102 aa)). N-linked (GlcNAc...) asparagine glycosylation is found at asparagine 40, asparagine 71, asparagine 86, and asparagine 99. Cysteine 78 and cysteine 114 form a disulfide bridge. The GPI-anchor amidated asparagine moiety is linked to residue asparagine 138. A propeptide spans 139 to 167 (SARRTFSVSGFAYQFLIPVAVFAAVGTRY) (removed in mature form).

This sequence belongs to the early nodulin-like (ENODL) family.

The protein resides in the cell membrane. In terms of biological role, may act as a carbohydrate transporter. This Arabidopsis thaliana (Mouse-ear cress) protein is Early nodulin-like protein 16.